A 141-amino-acid polypeptide reads, in one-letter code: Transmembrane protein 216 (141 aa).

Helical transmembrane passes span 15 to 35 (ILFFLNGWYYATYFLLELFIF), 49 to 69 (LVLDVVMLFLYLGVEVIRLFF), 82 to 102 (LGISVALTFPSTMMASYYLLL), and 115 to 135 (SILLFFCGSELLLEVLTLTAF).

In terms of assembly, part of the tectonic-like complex (also named B9 complex). Interacts with TMEM107.

The protein resides in the membrane. It is found in the cytoplasm. The protein localises to the cytoskeleton. It localises to the cilium basal body. In terms of biological role, part of the tectonic-like complex which is required for tissue-specific ciliogenesis and may regulate ciliary membrane composition. The chain is Transmembrane protein 216 (TMEM216) from Bos taurus (Bovine).